The following is a 406-amino-acid chain: Exodeoxyribonuclease 7 large subunit (406 aa).

It belongs to the XseA family. In terms of assembly, heterooligomer composed of large and small subunits.

It is found in the cytoplasm. The enzyme catalyses Exonucleolytic cleavage in either 5'- to 3'- or 3'- to 5'-direction to yield nucleoside 5'-phosphates.. In terms of biological role, bidirectionally degrades single-stranded DNA into large acid-insoluble oligonucleotides, which are then degraded further into small acid-soluble oligonucleotides. The chain is Exodeoxyribonuclease 7 large subunit from Desulfitobacterium hafniense (strain Y51).